The chain runs to 266 residues: Lipooligosaccharide biosynthesis protein lic2B (266 aa).

It belongs to the glycosyltransferase 25 family.

Its function is as follows. Involved in extracellular lipooligosaccharide (LOS) biosynthesis and virulence expression. Involved in the synthesis of the oligosaccharide moiety of the LOS molecule by adding GalNAc. This is Lipooligosaccharide biosynthesis protein lic2B (lic2B) from Haemophilus influenzae.